The following is a 249-amino-acid chain: Geranylgeranylglyceryl phosphate synthase (249 aa).

D20 and S49 together coordinate Mg(2+). Sn-glycerol 1-phosphate contacts are provided by residues Y169 to G175, G200 to G201, and G222 to N223.

Belongs to the GGGP/HepGP synthase family. Group II subfamily. Homohexamer. The cofactor is Mg(2+).

The catalysed reaction is sn-glycerol 1-phosphate + (2E,6E,10E)-geranylgeranyl diphosphate = sn-3-O-(geranylgeranyl)glycerol 1-phosphate + diphosphate. Its function is as follows. Prenyltransferase that catalyzes the transfer of the geranylgeranyl moiety of geranylgeranyl diphosphate (GGPP) to the C3 hydroxyl of sn-glycerol-1-phosphate (G1P). This Spirosoma linguale (strain ATCC 33905 / DSM 74 / LMG 10896 / Claus 1) protein is Geranylgeranylglyceryl phosphate synthase.